Reading from the N-terminus, the 58-residue chain is Large ribosomal subunit protein uL30 (58 aa).

The protein belongs to the universal ribosomal protein uL30 family. In terms of assembly, part of the 50S ribosomal subunit.

The sequence is that of Large ribosomal subunit protein uL30 from Wigglesworthia glossinidia brevipalpis.